A 675-amino-acid chain; its full sequence is Vitamin K-dependent protein S (675 aa).

Positions Met-1–Ala-24 are cleaved as a signal peptide. Residues Asn-25–Arg-41 constitute a propeptide that is removed on maturation. The Gla domain maps to Ala-42 to Gly-87. 4-carboxyglutamate is present on residues Glu-47, Glu-48, Glu-55, Glu-57, Glu-60, Glu-61, Glu-66, Glu-67, Glu-70, Glu-73, and Glu-77. An intrachain disulfide couples Cys-58 to Cys-63. 16 disulfide bridges follow: Cys-88/Cys-113, Cys-121/Cys-134, Cys-126/Cys-143, Cys-145/Cys-154, Cys-161/Cys-175, Cys-171/Cys-184, Cys-186/Cys-199, Cys-205/Cys-217, Cys-212/Cys-226, Cys-228/Cys-241, Cys-247/Cys-256, Cys-252/Cys-265, Cys-267/Cys-282, Cys-288/Cys-567, Cys-449/Cys-475, and Cys-638/Cys-665. The interval Cys-88–Ala-116 is thrombin-sensitive. In terms of domain architecture, EGF-like 1 spans Ile-117–Glu-155. Position 136 is a (3R)-3-hydroxyaspartate (Asp-136). In terms of domain architecture, EGF-like 2; calcium-binding spans Asp-157–Lys-200. (3R)-3-hydroxyasparagine is present on Asn-177. The EGF-like 3; calcium-binding domain maps to Asp-201 to Asp-242. (3R)-3-hydroxyasparagine is present on Asn-219. The EGF-like 4; calcium-binding domain maps to Asp-243 to Glu-283. Asn-258 bears the (3R)-3-hydroxyasparagine mark. 2 Laminin G-like domains span residues Leu-299 to Cys-475 and Tyr-484 to Cys-665. 2 N-linked (GlcNAc...) asparagine glycosylation sites follow: Asn-499 and Asn-509.

Post-translationally, the iron and 2-oxoglutarate dependent 3-hydroxylation of aspartate and asparagine is (R) stereospecific within EGF domains. As to expression, plasma.

It localises to the secreted. Its function is as follows. Anticoagulant plasma protein; it is a cofactor to activated protein C in the degradation of coagulation factors Va and VIIIa. It helps to prevent coagulation and stimulating fibrinolysis. This Bos taurus (Bovine) protein is Vitamin K-dependent protein S (PROS1).